The chain runs to 300 residues: tRNA pseudouridine synthase B (300 aa).

Catalysis depends on Asp-47, which acts as the Nucleophile.

It belongs to the pseudouridine synthase TruB family. Type 1 subfamily.

It catalyses the reaction uridine(55) in tRNA = pseudouridine(55) in tRNA. Its function is as follows. Responsible for synthesis of pseudouridine from uracil-55 in the psi GC loop of transfer RNAs. This is tRNA pseudouridine synthase B from Azoarcus sp. (strain BH72).